The following is a 507-amino-acid chain: 2,3-bisphosphoglycerate-independent phosphoglycerate mutase (507 aa).

Positions 13 and 63 each coordinate Mn(2+). The active-site Phosphoserine intermediate is the Ser63. Substrate contacts are provided by residues His124, 153–154 (RD), Arg183, Arg189, 254–257 (RADR), and Lys330. Mn(2+) is bound by residues Asp396, His400, Asp437, His438, and His456.

This sequence belongs to the BPG-independent phosphoglycerate mutase family. In terms of assembly, monomer. Requires Mn(2+) as cofactor.

It catalyses the reaction (2R)-2-phosphoglycerate = (2R)-3-phosphoglycerate. The protein operates within carbohydrate degradation; glycolysis; pyruvate from D-glyceraldehyde 3-phosphate: step 3/5. In terms of biological role, catalyzes the interconversion of 2-phosphoglycerate and 3-phosphoglycerate. The polypeptide is 2,3-bisphosphoglycerate-independent phosphoglycerate mutase (Paracoccus denitrificans (strain Pd 1222)).